The sequence spans 565 residues: Salicyl-AMP ligase / salicyl-S-ArCP synthetase (565 aa).

The ATP site is built by G214, G330, V352, D436, R451, and K542.

Belongs to the ATP-dependent AMP-binding enzyme family.

The enzyme catalyses salicylate + ATP + H(+) = 2-hydroxybenzoyl-5'-AMP + diphosphate. It carries out the reaction 2-hydroxybenzoyl-5'-AMP + holo-[ACP] = salicyl-[ACP] + AMP + H(+). Its pathway is siderophore biosynthesis; mycobactin biosynthesis. With respect to regulation, inhibited by salicyl-AMS, an acyl-AMP analog. Also inhibited by 5'-O-[(N-acyl)sulfamoyl]adenosines. Involved in the initial steps of the mycobactin biosynthetic pathway. Catalyzes the salicylation of the aryl carrier protein (ArCP) domain of MbtB through a two-step reaction. The first step is the ATP-dependent adenylation of salicylate to generate a salicyl-AMP intermediate. The second step is the transfer of this activated salicylate to MbtB to form a salicyl-ArCP domain thioester. This Mycobacterium tuberculosis (strain ATCC 25618 / H37Rv) protein is Salicyl-AMP ligase / salicyl-S-ArCP synthetase.